A 231-amino-acid chain; its full sequence is uncharacterized protein (231 aa).

Helical transmembrane passes span 6–26, 39–59, and 66–86; these read IKLI…YKYI, NIVS…STFS, and FCFQ…GYAF.

It localises to the cell membrane. This is an uncharacterized protein from Rickettsia prowazekii (strain Madrid E).